The sequence spans 503 residues: Lysine--tRNA ligase (503 aa).

Residues Glu-413 and Glu-420 each coordinate Mg(2+).

Belongs to the class-II aminoacyl-tRNA synthetase family. In terms of assembly, homodimer. The cofactor is Mg(2+).

Its subcellular location is the cytoplasm. It catalyses the reaction tRNA(Lys) + L-lysine + ATP = L-lysyl-tRNA(Lys) + AMP + diphosphate. This is Lysine--tRNA ligase from Actinobacillus succinogenes (strain ATCC 55618 / DSM 22257 / CCUG 43843 / 130Z).